The sequence spans 408 residues: Hepatocyte nuclear factor 4-gamma (408 aa).

Residues 9–84 (NCLCAICGDR…AGMKKEAVQN (76 aa)) constitute a DNA-binding region (nuclear receptor). NR C4-type zinc fingers lie at residues 12–32 (CAIC…CDGC) and 48–72 (CRFS…LRKC). Ser-94 bears the Phosphoserine mark. The NR LBD domain occupies 99–328 (SNIPSINTLA…NLLQEMLLGG (230 aa)). The segment at 368-390 (ISTPETPLPSPPQGSGQEQYKIA) is disordered. Residues Thr-370 and Thr-373 each carry the phosphothreonine modification. At Ser-377 the chain carries Phosphoserine.

This sequence belongs to the nuclear hormone receptor family. NR2 subfamily. Expressed in pancreas, kidney, small intestine and testis. Weakly expressed in colon. Not expressed in liver, skeletal muscle, lung, placenta, brain, heart, peripheral blood, ovary, prostate, thymus and spleen.

It is found in the nucleus. Its function is as follows. Transcription factor. Has a lower transcription activation potential than HNF4-alpha. The polypeptide is Hepatocyte nuclear factor 4-gamma (HNF4G) (Homo sapiens (Human)).